A 394-amino-acid polypeptide reads, in one-letter code: Protein TsgA homolog (394 aa).

12 consecutive transmembrane segments (helical) span residues 11–31 (WISY…GIVM), 51–71 (FLNA…EIIP), 76–96 (LVFG…GHNL), 101–121 (ISMF…TFLV), 134–154 (LLFT…AAAM), 162–182 (WYWV…LTLC), 206–226 (VGVL…LGFI), 246–266 (QLVS…SFIL), 274–294 (IVTV…STDN), 302–322 (ILAL…LGSL), 334–354 (FILT…GPIV), and 363–383 (LATA…LGFF).

The protein belongs to the major facilitator superfamily. TsgA family.

The protein localises to the cell inner membrane. The protein is Protein TsgA homolog of Yersinia pseudotuberculosis serotype O:1b (strain IP 31758).